The primary structure comprises 190 residues: Threonylcarbamoyl-AMP synthase (190 aa).

The 184-residue stretch at 7–190 (GDAIAAAIDV…ALTGELFRQG (184 aa)) folds into the YrdC-like domain.

Belongs to the SUA5 family. TsaC subfamily.

It is found in the cytoplasm. It catalyses the reaction L-threonine + hydrogencarbonate + ATP = L-threonylcarbamoyladenylate + diphosphate + H2O. Required for the formation of a threonylcarbamoyl group on adenosine at position 37 (t(6)A37) in tRNAs that read codons beginning with adenine. Catalyzes the conversion of L-threonine, HCO(3)(-)/CO(2) and ATP to give threonylcarbamoyl-AMP (TC-AMP) as the acyladenylate intermediate, with the release of diphosphate. The polypeptide is Threonylcarbamoyl-AMP synthase (Escherichia coli O6:H1 (strain CFT073 / ATCC 700928 / UPEC)).